The following is a 405-amino-acid chain: Eukaryotic initiation factor 4A (405 aa).

Positions 31–59 (ECFEALNLEGDLLRGIFAYGFEKPSAIQQ) match the Q motif motif. Residues 62–232 (IKPILDGYDT…TQFMRDPKRI (171 aa)) form the Helicase ATP-binding domain. 75 to 82 (AQSGTGKT) contributes to the ATP binding site. A DEAD box motif is present at residues 180–183 (DEAD). A Helicase C-terminal domain is found at 243–404 (GIRQFYVGVE…EMPMGITDIL (162 aa)).

It belongs to the DEAD box helicase family. eIF4A subfamily. As to quaternary structure, eIF4F is a multi-subunit complex, the composition of which varies with external and internal environmental conditions. It is composed of at least EIF4A, EIF4E and EIF4G.

It catalyses the reaction ATP + H2O = ADP + phosphate + H(+). Functionally, ATP-dependent RNA helicase which is a subunit of the eIF4F complex involved in cap recognition and is required for mRNA binding to ribosome. In the current model of translation initiation, eIF4A unwinds RNA secondary structures in the 5'-UTR of mRNAs which is necessary to allow efficient binding of the small ribosomal subunit, and subsequent scanning for the initiator codon. The chain is Eukaryotic initiation factor 4A (EIF4-A) from Cryptosporidium parvum.